The primary structure comprises 163 residues: Adenosine 5'-monophosphoramidase HINT2 (163 aa).

The N-terminal 17 residues, 1–17 (MAAAVLLAVGLRAARRT), are a transit peptide targeting the mitochondrion. An N6-succinyllysine modification is found at lysine 45. One can recognise an HIT domain in the interval 55–163 (IFSRILDRSL…GGRQLQWPPG (109 aa)). Positions 63 and 80 each coordinate AMP. Lysine 119 carries the post-translational modification N6-acetyllysine. At lysine 128 the chain carries N6-acetyllysine; alternate. N6-succinyllysine; alternate is present on lysine 128. Asparagine 136 provides a ligand contact to AMP. At lysine 139 the chain carries N6-acetyllysine. Residues 142-145 (AQSV) and 149-151 (HIH) contribute to the AMP site. A Histidine triad motif motif is present at residues 147–151 (HLHIH). Histidine 149 serves as the catalytic Tele-AMP-histidine intermediate.

The protein belongs to the HINT family.

It localises to the mitochondrion. The catalysed reaction is adenosine 5'-phosphoramidate + H2O = AMP + NH4(+). In terms of biological role, exhibits adenosine 5'-monophosphoramidase activity, hydrolyzing purine nucleotide phosphoramidates with a single phosphate group such as adenosine 5'monophosphoramidate (AMP-NH2) to yield AMP and NH2. Hydrolyzes adenosine 5'-O-p-nitrophenylphosphoramidate (AMP-pNA). May be involved in steroid biosynthesis. May play a role in apoptosis. The sequence is that of Adenosine 5'-monophosphoramidase HINT2 from Mus musculus (Mouse).